Here is a 472-residue protein sequence, read N- to C-terminus: Gamma-glutamylputrescine synthetase PuuA (472 aa).

Residues 35 to 129 enclose the GS beta-grasp domain; it reads PNTQYVDVLL…MLLTMVDEDG (95 aa). Residues 136 to 472 form the GS catalytic domain; the sequence is PRNVLNRLWQ…TEIEWMLKNA (337 aa).

The protein belongs to the glutamine synthetase family. In terms of assembly, dodecamer. Mg(2+) serves as cofactor. It depends on Mn(2+) as a cofactor.

It carries out the reaction putrescine + L-glutamate + ATP = gamma-L-glutamylputrescine + ADP + phosphate + H(+). The protein operates within amine and polyamine degradation; putrescine degradation; 4-aminobutanoate from putrescine: step 1/4. Functionally, involved in the breakdown of putrescine. Catalyzes the ATP-dependent gamma-glutamylation of putrescine, producing gamma-L-glutamylputrescine. Absolutely essential to utilize putrescine as both nitrogen and carbon sources and to decrease the toxicity of putrescine, which can lead to inhibition of cell growth and protein synthesis. In vitro is also able to use several diamines, and spermidine and spermine, instead of putrescine, but with a much lower activity, and cannot catalyze the gamma-glutamylation of ornithine or GABA. The protein is Gamma-glutamylputrescine synthetase PuuA of Escherichia coli (strain K12).